Here is a 538-residue protein sequence, read N- to C-terminus: Nucleobase-ascorbate transporter 7 (538 aa).

Residues 1-11 (MAGGGGGGGGV) are compositionally biased toward gly residues. Residues 1–20 (MAGGGGGGGGVAPPLKHDGL) form a disordered region. Helical transmembrane passes span 45-65 (AILL…LIPT), 81-101 (MVQT…FFGT), 103-123 (LPAV…IILA), 143-163 (IQGA…SGLW), 166-186 (VVRL…GFGL), 191-211 (FPLL…LLLF), 229-249 (FAVI…TVGG), 295-315 (FAMM…YIVV), 372-394 (VVQI…AIFA), 398-420 (APVV…LSLL), 432-452 (FILG…NQYT), and 471-491 (INVP…FLDV).

The protein belongs to the nucleobase:cation symporter-2 (NCS2) (TC 2.A.40) family. Expressed exclusively in ovules.

It is found in the cell membrane. This is Nucleobase-ascorbate transporter 7 (NAT7) from Arabidopsis thaliana (Mouse-ear cress).